The chain runs to 246 residues: MTTHQFEHPLNEKTRIYLRVEALLNQMERASTFSDGIQHQLFFRSLFDMLEIFEQIQLKSELAKDMEKQRLTYRSWLHVEGVDQEMLNSLLTEVDEVHRDLMSAERFGQSLKEDRFLSAIRQRFNLPGGSCCFDLPALHYWLHLPLDRKMRDAQQWMQTVTPLSNALKLWLKLTRETGHYRSRMASNGFYQSDAEDANILRLAIPLEYGVYPMISGHKNRFAIKFIDFHSGQACTQDIAFDLAVCC.

The protein belongs to the ZapD family. In terms of assembly, interacts with FtsZ.

It is found in the cytoplasm. Its function is as follows. Cell division factor that enhances FtsZ-ring assembly. Directly interacts with FtsZ and promotes bundling of FtsZ protofilaments, with a reduction in FtsZ GTPase activity. This is Cell division protein ZapD from Vibrio cholerae serotype O1 (strain ATCC 39541 / Classical Ogawa 395 / O395).